A 367-amino-acid polypeptide reads, in one-letter code: MQANSSAKSLPTECPDYQPIHHLHLVVYSVVLAAGLPLNALALWVFLRALRVHSVVSVYMCNLAASDLLFTLSLPLRLSYYARHYWPFPDFLCQLAGAVFQMNMYGSCIFLTLINVDRYAAIVHPLRLRHLRRPRVARLLCLGVWALILVFAVPTILAHQPSSCARDGRNVSLCFESFSDKLWKGSLLPLLLLAEALGFLLPLAAVVYSSGRVFWTLARPDATRSQRRRKTVRLLLASLVIFLLCFVPYNATLAVYGLLRGEVVPASSEARKKVRGVLMVMVLLAGANCVLDPLVYYFSAEGFRNTLRGLRAPLRDRTLAANGAQEALAEPLTETAHASTLTTTSQGQLQPSDPRSSFTPSHEDSSF.

Residues 1–25 (MQANSSAKSLPTECPDYQPIHHLHL) are Extracellular-facing. N-linked (GlcNAc...) asparagine glycosylation occurs at Asn-4. A helical membrane pass occupies residues 26 to 46 (VVYSVVLAAGLPLNALALWVF). Residues 47–54 (LRALRVHS) lie on the Cytoplasmic side of the membrane. A helical transmembrane segment spans residues 55-75 (VVSVYMCNLAASDLLFTLSLP). The Extracellular portion of the chain corresponds to 76 to 95 (LRLSYYARHYWPFPDFLCQL). The cysteines at positions 93 and 174 are disulfide-linked. Residues 96 to 116 (AGAVFQMNMYGSCIFLTLINV) traverse the membrane as a helical segment. Over 117-135 (DRYAAIVHPLRLRHLRRPR) the chain is Cytoplasmic. Residues 136 to 156 (VARLLCLGVWALILVFAVPTI) form a helical membrane-spanning segment. At 157 to 186 (LAHQPSSCARDGRNVSLCFESFSDKLWKGS) the chain is on the extracellular side. Residue Asn-170 is glycosylated (N-linked (GlcNAc...) asparagine). The chain crosses the membrane as a helical span at residues 187–207 (LLPLLLLAEALGFLLPLAAVV). Over 208–238 (YSSGRVFWTLARPDATRSQRRRKTVRLLLAS) the chain is Cytoplasmic. The chain crosses the membrane as a helical span at residues 239–259 (LVIFLLCFVPYNATLAVYGLL). The Extracellular segment spans residues 260–275 (RGEVVPASSEARKKVR). The chain crosses the membrane as a helical span at residues 276–296 (GVLMVMVLLAGANCVLDPLVY). Topologically, residues 297–367 (YFSAEGFRNT…FTPSHEDSSF (71 aa)) are cytoplasmic. Over residues 332–350 (LTETAHASTLTTTSQGQLQ) the composition is skewed to low complexity. Residues 332–367 (LTETAHASTLTTTSQGQLQPSDPRSSFTPSHEDSSF) are disordered. Over residues 351 to 360 (PSDPRSSFTP) the composition is skewed to polar residues.

Belongs to the G-protein coupled receptor 1 family.

The protein localises to the cell membrane. In terms of biological role, receptor for lysophosphatidic acid (LPA), a mediator of diverse cellular activities. The sequence is that of Lysophosphatidic acid receptor 5 (LPAR5) from Bos taurus (Bovine).